The following is an 876-amino-acid chain: Translation initiation factor IF-2 (876 aa).

One can recognise a tr-type G domain in the interval 378–547; sequence TRPPIITIMG…LTQSEMLELK (170 aa). The tract at residues 387–394 is G1; sequence GHVDHGKT. Position 387-394 (387-394) interacts with GTP; that stretch reads GHVDHGKT. The G2 stretch occupies residues 412-416; sequence RITQH. The G3 stretch occupies residues 433–436; it reads DTPG. GTP is bound by residues 433–437 and 487–490; these read DTPGH and NKID. The segment at 487 to 490 is G4; sequence NKID. A G5 region spans residues 523–525; the sequence is SAK.

Belongs to the TRAFAC class translation factor GTPase superfamily. Classic translation factor GTPase family. IF-2 subfamily.

The protein localises to the cytoplasm. Functionally, one of the essential components for the initiation of protein synthesis. Protects formylmethionyl-tRNA from spontaneous hydrolysis and promotes its binding to the 30S ribosomal subunits. Also involved in the hydrolysis of GTP during the formation of the 70S ribosomal complex. The chain is Translation initiation factor IF-2 from Buchnera aphidicola subsp. Baizongia pistaciae (strain Bp).